The chain runs to 536 residues: Hydroxylamine oxidoreductase (536 aa).

An N-terminal signal peptide occupies residues 1–26 (MFEIFKKPLSRIVGATFAFAGVTLLA). Residues C116, C119, H120, H136, C160, C163, H164, H168, C179, C182, H183, H198, C223, C226, H227, C234, C237, H238, H241, C254, C257, and H258 each coordinate heme c. H263 is a binding site for hydroxylamine. Heme c is bound by residues H274, C301, C304, H305, H311, C346, C349, H350, H443, and Y451.

In terms of assembly, homotrimer; subunits are linked by two covalent bonds between Tyr-451 of one subunit and heme P460 of an adjacent subunit. The cofactor is heme c.

The protein resides in the anammoxosome. The enzyme catalyses hydroxylamine + 3 Fe(III)-[cytochrome c] = nitric oxide + 3 Fe(II)-[cytochrome c] + 3 H(+). Catalyzes the oxidation of hydroxylamine to nitric oxide with cytochrome c acting as an electron acceptor. Does not oxidize hydroxylamine to nitrite. Also able to catalyze the four-electron oxidation of hydrazine to N(2) in vitro with reduced efficiency; however, this reaction is probably not physiological. The sequence is that of Hydroxylamine oxidoreductase from Kuenenia stuttgartiensis.